The chain runs to 708 residues: Leukotoxin translocation ATP-binding protein LktB (708 aa).

The region spanning 1 to 126 is the Peptidase C39 domain; that stretch reads MEVNHQSNDL…SCYQGKIILV (126 aa). The 283-residue stretch at 155-437 folds into the ABC transmembrane type-1 domain; it reads FLETLLVSIF…LAQLWQDFTQ (283 aa). 5 consecutive transmembrane segments (helical) span residues 159–179, 192–212, 270–290, 296–316, and 389–409; these read LLVS…FQVV, LNII…LSGL, ALTS…MWYY, LVIL…SPIL, and VMVI…LSIG. One can recognise an ABC transporter domain in the interval 469–704; sequence IAFKNIRFRY…NNGLYSYLHQ (236 aa). Residue 503-510 coordinates ATP; it reads GRSGSGKS.

This sequence belongs to the ABC transporter superfamily. Protein-1 exporter (TC 3.A.1.109) family. As to quaternary structure, homodimer.

It localises to the cell inner membrane. It carries out the reaction ATP + H2O + proteinSide 1 = ADP + phosphate + proteinSide 2.. Its function is as follows. Part of the ABC transporter complex LktBD involved in leukotoxin export. Transmembrane domains (TMD) form a pore in the inner membrane and the ATP-binding domain (NBD) is responsible for energy generation. The protein is Leukotoxin translocation ATP-binding protein LktB (lktB) of Pasteurella haemolytica-like sp. (strain 5943B).